Reading from the N-terminus, the 197-residue chain is Imidazoleglycerol-phosphate dehydratase (197 aa).

Belongs to the imidazoleglycerol-phosphate dehydratase family.

The protein resides in the cytoplasm. The catalysed reaction is D-erythro-1-(imidazol-4-yl)glycerol 3-phosphate = 3-(imidazol-4-yl)-2-oxopropyl phosphate + H2O. It participates in amino-acid biosynthesis; L-histidine biosynthesis; L-histidine from 5-phospho-alpha-D-ribose 1-diphosphate: step 6/9. This chain is Imidazoleglycerol-phosphate dehydratase, found in Pseudomonas entomophila (strain L48).